The chain runs to 73 residues: MAKTITISEEAYRLLLSEKREGESFSDVIIRLVKSSRKNIMDYAGIWGDMNDEEVNKLFEDLKKMWERWNVNA.

The protein belongs to the UPF0330 family.

Functionally, possibly the antitoxin component of a type II toxin-antitoxin (TA) system. Its cognate toxin is VapC21 (Potential). In Sulfurisphaera tokodaii (strain DSM 16993 / JCM 10545 / NBRC 100140 / 7) (Sulfolobus tokodaii), this protein is Putative antitoxin VapB21 (vapB21).